We begin with the raw amino-acid sequence, 293 residues long: 4-hydroxy-tetrahydrodipicolinate synthase (293 aa).

T45 serves as a coordination point for pyruvate. The active-site Proton donor/acceptor is the Y133. K161 acts as the Schiff-base intermediate with substrate in catalysis. V203 is a binding site for pyruvate.

This sequence belongs to the DapA family. As to quaternary structure, homotetramer; dimer of dimers.

Its subcellular location is the cytoplasm. The enzyme catalyses L-aspartate 4-semialdehyde + pyruvate = (2S,4S)-4-hydroxy-2,3,4,5-tetrahydrodipicolinate + H2O + H(+). Its pathway is amino-acid biosynthesis; L-lysine biosynthesis via DAP pathway; (S)-tetrahydrodipicolinate from L-aspartate: step 3/4. Functionally, catalyzes the condensation of (S)-aspartate-beta-semialdehyde [(S)-ASA] and pyruvate to 4-hydroxy-tetrahydrodipicolinate (HTPA). The polypeptide is 4-hydroxy-tetrahydrodipicolinate synthase (Exiguobacterium sp. (strain ATCC BAA-1283 / AT1b)).